The following is a 247-amino-acid chain: tRNA uridine(34) hydroxylase (247 aa).

A Rhodanese domain is found at 124–218 (TKQNVILIDT…YLEDTHNKNN (95 aa)). C178 (cysteine persulfide intermediate) is an active-site residue.

This sequence belongs to the TrhO family.

The enzyme catalyses uridine(34) in tRNA + AH2 + O2 = 5-hydroxyuridine(34) in tRNA + A + H2O. Its function is as follows. Catalyzes oxygen-dependent 5-hydroxyuridine (ho5U) modification at position 34 in tRNAs. This chain is tRNA uridine(34) hydroxylase, found in Rickettsia prowazekii (strain Madrid E).